The chain runs to 544 residues: L-aspartate oxidase (544 aa).

Residues 17-20, lysine 39, 46-53, and aspartate 221 each bind FAD; these read SGGA and STFYAQGG. Catalysis depends on arginine 288, which acts as the Proton donor/acceptor. FAD contacts are provided by residues glutamate 373 and 389–390; that span reads SL.

The protein belongs to the FAD-dependent oxidoreductase 2 family. NadB subfamily. It depends on FAD as a cofactor.

The protein resides in the cytoplasm. The catalysed reaction is L-aspartate + O2 = iminosuccinate + H2O2. It participates in cofactor biosynthesis; NAD(+) biosynthesis; iminoaspartate from L-aspartate (oxidase route): step 1/1. Catalyzes the oxidation of L-aspartate to iminoaspartate, the first step in the de novo biosynthesis of NAD(+). This is L-aspartate oxidase from Acinetobacter baylyi (strain ATCC 33305 / BD413 / ADP1).